The following is a 490-amino-acid chain: N-succinylglutamate 5-semialdehyde dehydrogenase (490 aa).

223–228 (GSAGTG) is a binding site for NAD(+). Catalysis depends on residues E246 and C280.

This sequence belongs to the aldehyde dehydrogenase family. AstD subfamily.

It carries out the reaction N-succinyl-L-glutamate 5-semialdehyde + NAD(+) + H2O = N-succinyl-L-glutamate + NADH + 2 H(+). Its pathway is amino-acid degradation; L-arginine degradation via AST pathway; L-glutamate and succinate from L-arginine: step 4/5. In terms of biological role, catalyzes the NAD-dependent reduction of succinylglutamate semialdehyde into succinylglutamate. This is N-succinylglutamate 5-semialdehyde dehydrogenase from Serratia proteamaculans (strain 568).